We begin with the raw amino-acid sequence, 315 residues long: Ribose-phosphate pyrophosphokinase (315 aa).

ATP is bound by residues 41–43 (DGE) and 100–101 (RQ). The Mg(2+) site is built by H134 and D173. Residue K196 is part of the active site. D-ribose 5-phosphate contacts are provided by residues R198, D222, and 226–230 (DTAGT).

Belongs to the ribose-phosphate pyrophosphokinase family. Class I subfamily. Homohexamer. Mg(2+) is required as a cofactor.

It is found in the cytoplasm. It catalyses the reaction D-ribose 5-phosphate + ATP = 5-phospho-alpha-D-ribose 1-diphosphate + AMP + H(+). It functions in the pathway metabolic intermediate biosynthesis; 5-phospho-alpha-D-ribose 1-diphosphate biosynthesis; 5-phospho-alpha-D-ribose 1-diphosphate from D-ribose 5-phosphate (route I): step 1/1. Its function is as follows. Involved in the biosynthesis of the central metabolite phospho-alpha-D-ribosyl-1-pyrophosphate (PRPP) via the transfer of pyrophosphoryl group from ATP to 1-hydroxyl of ribose-5-phosphate (Rib-5-P). This is Ribose-phosphate pyrophosphokinase from Bacillus caldolyticus.